A 305-amino-acid chain; its full sequence is Ribosomal RNA small subunit methyltransferase H (305 aa).

S-adenosyl-L-methionine is bound by residues 47–49 (GGH), Asp-66, Phe-93, Asp-108, and Gln-115.

The protein belongs to the methyltransferase superfamily. RsmH family.

Its subcellular location is the cytoplasm. It catalyses the reaction cytidine(1402) in 16S rRNA + S-adenosyl-L-methionine = N(4)-methylcytidine(1402) in 16S rRNA + S-adenosyl-L-homocysteine + H(+). Its function is as follows. Specifically methylates the N4 position of cytidine in position 1402 (C1402) of 16S rRNA. The chain is Ribosomal RNA small subunit methyltransferase H from Prochlorococcus marinus (strain MIT 9211).